A 422-amino-acid polypeptide reads, in one-letter code: MDYSRLLKRSVSAALTAAALLCSTAAFAGEVTIWCWDPNFNVAIMKEAAERYTAKHPDTTFNIVDFAKADVEQKLQTGLASGMTDTLPDIVLIEDYGAQKYLQSFPGSFAALTDKIDFSGFAKYKVDLMTLEGQVYGVPFDSGVTGLYYRTDYLEQAGFKPEDMQNLTWDRFIEIGKEVKAKTGHEMMALDANDGGLIRIMMQSGGQWYFNEDGSLNITGNAALKAALETQARIVNERVAKPTSGSNDGIRALTSGDVASVLRGVWITGTVKSQPDQAGKWALTAIPKLNIEGATAASNLGGSSWYVLEASAEKDEAIDFLNEIYAKDLDFYQKILTERGAVGSLLAARTGEAYQKPDDFFGGQTVWQNFADWLVQVPAVNYGIFTNELDTAVTANFPALVKGTPVDEVLKAIEDQAAGQIQ.

An N-terminal signal peptide occupies residues 1–28; the sequence is MDYSRLLKRSVSAALTAAALLCSTAAFA. The segment at 246–277 is lactose-binding; the sequence is SNDGIRALTSGDVASVLRGVWITGTVKSQPDQ.

The protein belongs to the bacterial solute-binding protein 1 family.

It localises to the periplasm. Functionally, part of the binding-protein-dependent transport system for lactose. This Rhizobium radiobacter (Agrobacterium tumefaciens) protein is Lactose-binding protein (lacE).